The chain runs to 299 residues: Proline iminopeptidase (299 aa).

Residues 26 to 272 enclose the AB hydrolase-1 domain; the sequence is VLLLAGGPGF…QFLYCANGSH (247 aa). S103 serves as the catalytic Nucleophile. D245 is a catalytic residue. H272 functions as the Proton donor in the catalytic mechanism.

Belongs to the peptidase S33 family. As to quaternary structure, monomer.

It carries out the reaction Release of N-terminal proline from a peptide.. Releases the N-terminal proline from various substrates. The protein is Proline iminopeptidase of Chitinophaga pinensis (strain ATCC 43595 / DSM 2588 / LMG 13176 / NBRC 15968 / NCIMB 11800 / UQM 2034).